The chain runs to 159 residues: 6,7-dimethyl-8-ribityllumazine synthase (159 aa).

Residues Phe22, 56–58, and 80–82 each bind 5-amino-6-(D-ribitylamino)uracil; these read AFE and AVI. Residue 85–86 participates in (2S)-2-hydroxy-3-oxobutyl phosphate binding; that stretch reads AT. The Proton donor role is filled by His88. Phe113 contributes to the 5-amino-6-(D-ribitylamino)uracil binding site. Arg127 provides a ligand contact to (2S)-2-hydroxy-3-oxobutyl phosphate.

Belongs to the DMRL synthase family.

It carries out the reaction (2S)-2-hydroxy-3-oxobutyl phosphate + 5-amino-6-(D-ribitylamino)uracil = 6,7-dimethyl-8-(1-D-ribityl)lumazine + phosphate + 2 H2O + H(+). The protein operates within cofactor biosynthesis; riboflavin biosynthesis; riboflavin from 2-hydroxy-3-oxobutyl phosphate and 5-amino-6-(D-ribitylamino)uracil: step 1/2. Functionally, catalyzes the formation of 6,7-dimethyl-8-ribityllumazine by condensation of 5-amino-6-(D-ribitylamino)uracil with 3,4-dihydroxy-2-butanone 4-phosphate. This is the penultimate step in the biosynthesis of riboflavin. The chain is 6,7-dimethyl-8-ribityllumazine synthase from Lactiplantibacillus plantarum (strain ATCC BAA-793 / NCIMB 8826 / WCFS1) (Lactobacillus plantarum).